Consider the following 289-residue polypeptide: MATDAAEKANILAEALPYIREFAGKTIVIKYGGNAMTDDALKEGFAKDVVLLKLVGMNPVVVHGGGPQINDLLARVGKQGEFIQGMRVTDAETMEVVEMVLGGLVNKEIVSLINKHGGKAVGLTGKDGHFIRARKLFLKTDGDEDVDIGQVGEIEAIDPALVSLLDSQDFIPVVAPIGVGVDGEAYNINADLVAGKLAETLRAEKLVLMTNTPGVLDKQGQLLTGLTAQRIDELFADGTISGGMLPKISSALDAARNGVNSVHVIDGRVKHALLLEILTAAGVGTMIRA.

Residues 65 to 66, Arg87, and Asn187 contribute to the substrate site; that span reads GG.

This sequence belongs to the acetylglutamate kinase family. ArgB subfamily.

It is found in the cytoplasm. It carries out the reaction N-acetyl-L-glutamate + ATP = N-acetyl-L-glutamyl 5-phosphate + ADP. The protein operates within amino-acid biosynthesis; L-arginine biosynthesis; N(2)-acetyl-L-ornithine from L-glutamate: step 2/4. In terms of biological role, catalyzes the ATP-dependent phosphorylation of N-acetyl-L-glutamate. This chain is Acetylglutamate kinase, found in Chromobacterium violaceum (strain ATCC 12472 / DSM 30191 / JCM 1249 / CCUG 213 / NBRC 12614 / NCIMB 9131 / NCTC 9757 / MK).